Here is a 305-residue protein sequence, read N- to C-terminus: MRKIIVGSRRSQLAMTQTKWVIEQLKQAGATNEFEIKEIVTKGDQIVDVQLSKVGGKGLFVKEIQQQMLDGDIDFAVHSMKDVPAELPEELYISCMPKRVDARDVLICENGYTFETLPKGSIVGTSSLRRGAQILAARPDLEIQWIRGNIDTRLKKLDSENYNAILLAKAGLERMGWTDRVDFEALDPDVMVPAVGQGVLAIESRKDDAEVTTVLQLLHDDVTAKAATAERTFLKAIEGSCHVPVGGYATVNGDDVTLTGLIASVDGKEVLRVTKTSTDGVALGQAVAEELLGRGGREILASVNE.

At cysteine 241 the chain carries S-(dipyrrolylmethanemethyl)cysteine.

Belongs to the HMBS family. As to quaternary structure, monomer. Dipyrromethane serves as cofactor.

It catalyses the reaction 4 porphobilinogen + H2O = hydroxymethylbilane + 4 NH4(+). The protein operates within porphyrin-containing compound metabolism; protoporphyrin-IX biosynthesis; coproporphyrinogen-III from 5-aminolevulinate: step 2/4. Tetrapolymerization of the monopyrrole PBG into the hydroxymethylbilane pre-uroporphyrinogen in several discrete steps. This Exiguobacterium sp. (strain ATCC BAA-1283 / AT1b) protein is Porphobilinogen deaminase.